The following is a 307-amino-acid chain: Mediator of RNA polymerase II transcription subunit 18 (307 aa).

Polar residues predominate over residues 117–126; that stretch reads TNFNSTNEDQ. Positions 117–162 are disordered; that stretch reads TNFNSTNEDQNNSKHTEDTVNESRNSDDIIDVDMDASPAPSNESCS.

Belongs to the Mediator complex subunit 18 family. As to quaternary structure, component of the Mediator complex, which is composed of at least 21 subunits that form three structurally distinct submodules. The Mediator head module contains MED6, MED8, MED11, SRB4/MED17, SRB5/MED18, ROX3/MED19, SRB2/MED20 and SRB6/MED22, the middle module contains MED1, MED4, NUT1/MED5, MED7, CSE2/MED9, NUT2/MED10, SRB7/MED21 and SOH1/MED31, and the tail module contains MED2, PGD1/MED3, RGR1/MED14, GAL11/MED15 and SIN4/MED16. The head and the middle modules interact directly with RNA polymerase II, whereas the elongated tail module interacts with gene-specific regulatory proteins. SRB5/MED18 interacts directly with MED8 and SRB2/MED20.

It is found in the nucleus. Component of the Mediator complex, a coactivator involved in the regulated transcription of nearly all RNA polymerase II-dependent genes. Mediator functions as a bridge to convey information from gene-specific regulatory proteins to the basal RNA polymerase II transcription machinery. The Mediator complex, having a compact conformation in its free form, is recruited to promoters by direct interactions with regulatory proteins and serves for the assembly of a functional preinitiation complex with RNA polymerase II and the general transcription factors. The Mediator complex unfolds to an extended conformation and partially surrounds RNA polymerase II, specifically interacting with the unphosphorylated form of the C-terminal domain (CTD) of RNA polymerase II. The Mediator complex dissociates from the RNA polymerase II holoenzyme and stays at the promoter when transcriptional elongation begins. This chain is Mediator of RNA polymerase II transcription subunit 18 (SRB5), found in Saccharomyces cerevisiae (strain ATCC 204508 / S288c) (Baker's yeast).